A 254-amino-acid polypeptide reads, in one-letter code: Thiazole synthase (254 aa).

Lys95 serves as the catalytic Schiff-base intermediate with DXP. 1-deoxy-D-xylulose 5-phosphate is bound by residues Gly156, 182–183, and 204–205; these read AG and NT.

This sequence belongs to the ThiG family. Homotetramer. Forms heterodimers with either ThiH or ThiS.

Its subcellular location is the cytoplasm. It carries out the reaction [ThiS sulfur-carrier protein]-C-terminal-Gly-aminoethanethioate + 2-iminoacetate + 1-deoxy-D-xylulose 5-phosphate = [ThiS sulfur-carrier protein]-C-terminal Gly-Gly + 2-[(2R,5Z)-2-carboxy-4-methylthiazol-5(2H)-ylidene]ethyl phosphate + 2 H2O + H(+). It functions in the pathway cofactor biosynthesis; thiamine diphosphate biosynthesis. In terms of biological role, catalyzes the rearrangement of 1-deoxy-D-xylulose 5-phosphate (DXP) to produce the thiazole phosphate moiety of thiamine. Sulfur is provided by the thiocarboxylate moiety of the carrier protein ThiS. In vitro, sulfur can be provided by H(2)S. The sequence is that of Thiazole synthase from Shewanella oneidensis (strain ATCC 700550 / JCM 31522 / CIP 106686 / LMG 19005 / NCIMB 14063 / MR-1).